A 122-amino-acid chain; its full sequence is Large ribosomal subunit protein uL14 (122 aa).

Belongs to the universal ribosomal protein uL14 family. In terms of assembly, part of the 50S ribosomal subunit. Forms a cluster with proteins L3 and L19. In the 70S ribosome, L14 and L19 interact and together make contacts with the 16S rRNA in bridges B5 and B8.

Binds to 23S rRNA. Forms part of two intersubunit bridges in the 70S ribosome. The chain is Large ribosomal subunit protein uL14 from Cereibacter sphaeroides (strain ATCC 17029 / ATH 2.4.9) (Rhodobacter sphaeroides).